A 353-amino-acid chain; its full sequence is Phosphoribosylformylglycinamidine cyclo-ligase (353 aa).

It belongs to the AIR synthase family.

The protein localises to the cytoplasm. It catalyses the reaction 2-formamido-N(1)-(5-O-phospho-beta-D-ribosyl)acetamidine + ATP = 5-amino-1-(5-phospho-beta-D-ribosyl)imidazole + ADP + phosphate + H(+). The protein operates within purine metabolism; IMP biosynthesis via de novo pathway; 5-amino-1-(5-phospho-D-ribosyl)imidazole from N(2)-formyl-N(1)-(5-phospho-D-ribosyl)glycinamide: step 2/2. The chain is Phosphoribosylformylglycinamidine cyclo-ligase from Methylocella silvestris (strain DSM 15510 / CIP 108128 / LMG 27833 / NCIMB 13906 / BL2).